The primary structure comprises 195 residues: Probable GTP-binding protein EngB (195 aa).

The 174-residue stretch at glycine 22–glutamate 195 folds into the EngB-type G domain. GTP-binding positions include glycine 30–serine 37, glycine 57–threonine 61, aspartate 75–glycine 78, threonine 142–aspartate 145, and phenylalanine 174–serine 176. Mg(2+)-binding residues include serine 37 and threonine 59.

The protein belongs to the TRAFAC class TrmE-Era-EngA-EngB-Septin-like GTPase superfamily. EngB GTPase family. Mg(2+) is required as a cofactor.

Functionally, necessary for normal cell division and for the maintenance of normal septation. This chain is Probable GTP-binding protein EngB, found in Geobacillus thermodenitrificans (strain NG80-2).